A 274-amino-acid chain; its full sequence is MSVQTTIKRKTAPDIRARKGGDPIVMLTSYHAHTASLVDRYCDVILVGDSLGNVMHGFETTIPVTLEMMILQGHAVMRGSQHALVVVDMPFGSYEASKEQAFHSAARILKETHCGAVKLEGGVRMAETIAFLTERGIPVMGHIGLTPQSINTLGSFRAQGREEGSWEPIEADARAVADAGAFSVVVEAVAEPLGRKITETIAIPTIGIGASAACDGQVLVLEDMLGLSPRTPKFVKRYGELGPGIEAAIKGYAEEVRSRAFPGPEHVYGMKAKG.

Residues D49 and D88 each contribute to the Mg(2+) site. Residues 49-50 (DS), D88, and K118 each bind 3-methyl-2-oxobutanoate. E120 serves as a coordination point for Mg(2+). The active-site Proton acceptor is E187.

The protein belongs to the PanB family. Homodecamer; pentamer of dimers. Requires Mg(2+) as cofactor.

It is found in the cytoplasm. It catalyses the reaction 3-methyl-2-oxobutanoate + (6R)-5,10-methylene-5,6,7,8-tetrahydrofolate + H2O = 2-dehydropantoate + (6S)-5,6,7,8-tetrahydrofolate. Its pathway is cofactor biosynthesis; (R)-pantothenate biosynthesis; (R)-pantoate from 3-methyl-2-oxobutanoate: step 1/2. Functionally, catalyzes the reversible reaction in which hydroxymethyl group from 5,10-methylenetetrahydrofolate is transferred onto alpha-ketoisovalerate to form ketopantoate. In Rhodopseudomonas palustris (strain HaA2), this protein is 3-methyl-2-oxobutanoate hydroxymethyltransferase.